The primary structure comprises 222 residues: Sugar fermentation stimulation protein homolog (222 aa).

It belongs to the SfsA family.

The chain is Sugar fermentation stimulation protein homolog from Thermotoga sp. (strain RQ2).